Consider the following 165-residue polypeptide: uncharacterized protein (165 aa).

This is an uncharacterized protein from Saccharomyces cerevisiae (strain ATCC 204508 / S288c) (Baker's yeast).